Consider the following 428-residue polypeptide: Spliceosome RNA helicase DDX39B (428 aa).

Over residues 1 to 19 (MAENDVDNELLDYEEDEVE) the composition is skewed to acidic residues. The segment at 1–35 (MAENDVDNELLDYEEDEVENAAGGDGSEAPPKKDV) is disordered. A Q motif motif is present at residues 45–73 (SGFRDFLLKPELLRAIVDCGFEHPSEVQH). One can recognise a Helicase ATP-binding domain in the interval 76–249 (IPQAILGMDV…RKFMQDPMEI (174 aa)). 89–96 (AKSGMGKT) is an ATP binding site. The DECD box motif lies at 196–199 (DECD). One can recognise a Helicase C-terminal domain in the interval 261–422 (GLQQYYVKLK…ELPDEIDISS (162 aa)).

The protein belongs to the DEAD box helicase family. DECD subfamily. As to quaternary structure, component of the transcription/export (TREX) complex at least composed of ALYREF/THOC4, DDX39B, SARNP/CIP29, CHTOP and the THO subcomplex.

The protein resides in the nucleus. It is found in the nucleus speckle. It catalyses the reaction ATP + H2O = ADP + phosphate + H(+). Involved in nuclear export of spliced and unspliced mRNA. Component of the TREX complex which is thought to couple mRNA transcription, processing and nuclear export, and specifically associates with spliced mRNA and not with unspliced pre-mRNA. The TREX complex is recruited to spliced mRNAs by a transcription-independent mechanism, binds to mRNA upstream of the exon-junction complex (EJC) and is recruited in a splicing- and cap-dependent manner to a region near the 5' end of the mRNA where it functions in mRNA export to the cytoplasm via the TAP/NXF1 pathway. Involved in transcription elongation and genome stability. Its function is as follows. Splice factor that is required for the first ATP-dependent step in spliceosome assembly and for the interaction of U2 snRNP with the branchpoint. Has both RNA-stimulated ATP binding/hydrolysis activity and ATP-dependent RNA unwinding activity. Even with the stimulation of RNA, the ATPase activity is weak. Can only hydrolyze ATP but not other NTPs. The RNA stimulation of ATPase activity does not have a strong preference for the sequence and length of the RNA. However, ssRNA stimulates the ATPase activity much more strongly than dsRNA. Can unwind 5' or 3' overhangs or blunt end RNA duplexes in vitro. The ATPase and helicase activities are not influenced by U2AF2; the effect of ALYREF/THOC4 is reported conflictingly. The protein is Spliceosome RNA helicase DDX39B (DDX39B) of Gallus gallus (Chicken).